Consider the following 238-residue polypeptide: Serine protease SplA (238 aa).

The signal sequence occupies residues 1–38 (MNKNVMVKGLTALTILTILTSLGFAENISNQPHSIAKA). Active-site charge relay system residues include His-77, Asp-116, and Ser-192.

Belongs to the peptidase S1B family.

Its subcellular location is the secreted. This is Serine protease SplA (splA) from Staphylococcus aureus (strain COL).